The chain runs to 208 residues: Octanoyltransferase (208 aa).

The BPL/LPL catalytic domain occupies 29-208 (KTQDELVWLL…KEFNKVFCNC (180 aa)). Substrate contacts are provided by residues 68 to 75 (RGGKYTYH), 140 to 142 (AFG), and 153 to 155 (GVS). Cys171 (acyl-thioester intermediate) is an active-site residue.

It belongs to the LipB family.

It is found in the cytoplasm. The enzyme catalyses octanoyl-[ACP] + L-lysyl-[protein] = N(6)-octanoyl-L-lysyl-[protein] + holo-[ACP] + H(+). Its pathway is protein modification; protein lipoylation via endogenous pathway; protein N(6)-(lipoyl)lysine from octanoyl-[acyl-carrier-protein]: step 1/2. Its function is as follows. Catalyzes the transfer of endogenously produced octanoic acid from octanoyl-acyl-carrier-protein onto the lipoyl domains of lipoate-dependent enzymes. Lipoyl-ACP can also act as a substrate although octanoyl-ACP is likely to be the physiological substrate. In Ehrlichia ruminantium (strain Gardel), this protein is Octanoyltransferase.